Consider the following 722-residue polypeptide: Tegument protein UL46 (722 aa).

The interval 423 to 534 (RLAASGPPGG…AAAARPLAAQ (112 aa)) is disordered. Composition is skewed to basic and acidic residues over residues 440-451 (CRDKIQRTRRDN) and 474-491 (HREDLPEPPHVDAADRGP). The segment covering 510-522 (PRLPPRNPAPPEQ) has biased composition (pro residues). Over residues 523 to 534 (RPAAAARPLAAQ) the composition is skewed to low complexity.

Belongs to the herpesviridae HHV-1 VP11/12 protein family. As to quaternary structure, interacts with VP16. Interacts with host LCK, PIK3R1, SHC1 AND GRB2; these interactions promote the activation of the PI3K/AKT pathway. Interacts with host YWHAB. Interacts with ICP0; this interaction targets UL46 for degradation by the proteasome. Phosphorylated by host LCK. The phosphorylation seems to be lymphocyte-specific.

It is found in the virion tegument. It localises to the host cell membrane. Plays a role in the activation of the host PI3K/AKT pathway to promote cell survival. Interacts with and activates host LCK and thereby recruits downstream partners SHC1, GRB2 and PI3KR1 in order to activate the PI3K pathway by phosphorylating host AKT on its activating residues. This mechanism is inhibited by the viral protein US3 that instead promotes incorporation of UL46 into virions. This is Tegument protein UL46 from Homo sapiens (Human).